The chain runs to 265 residues: 3-methyl-2-oxobutanoate hydroxymethyltransferase (265 aa).

D41 and D80 together coordinate Mg(2+). Residues 41–42 (DS), D80, and K109 contribute to the 3-methyl-2-oxobutanoate site. A Mg(2+)-binding site is contributed by E111. The active-site Proton acceptor is E178.

This sequence belongs to the PanB family. Homodecamer; pentamer of dimers. It depends on Mg(2+) as a cofactor.

Its subcellular location is the cytoplasm. The enzyme catalyses 3-methyl-2-oxobutanoate + (6R)-5,10-methylene-5,6,7,8-tetrahydrofolate + H2O = 2-dehydropantoate + (6S)-5,6,7,8-tetrahydrofolate. It functions in the pathway cofactor biosynthesis; (R)-pantothenate biosynthesis; (R)-pantoate from 3-methyl-2-oxobutanoate: step 1/2. Its function is as follows. Catalyzes the reversible reaction in which hydroxymethyl group from 5,10-methylenetetrahydrofolate is transferred onto alpha-ketoisovalerate to form ketopantoate. This Thermosipho africanus (strain TCF52B) protein is 3-methyl-2-oxobutanoate hydroxymethyltransferase.